A 323-amino-acid polypeptide reads, in one-letter code: Acetyl-coenzyme A carboxylase carboxyl transferase subunit alpha (323 aa).

Residues 39-293 form the CoA carboxyltransferase C-terminal domain; the sequence is RLSKKSQQLT…RRALADSLRQ (255 aa).

The protein belongs to the AccA family. Acetyl-CoA carboxylase is a heterohexamer composed of biotin carboxyl carrier protein (AccB), biotin carboxylase (AccC) and two subunits each of ACCase subunit alpha (AccA) and ACCase subunit beta (AccD).

It localises to the cytoplasm. It carries out the reaction N(6)-carboxybiotinyl-L-lysyl-[protein] + acetyl-CoA = N(6)-biotinyl-L-lysyl-[protein] + malonyl-CoA. The protein operates within lipid metabolism; malonyl-CoA biosynthesis; malonyl-CoA from acetyl-CoA: step 1/1. In terms of biological role, component of the acetyl coenzyme A carboxylase (ACC) complex. First, biotin carboxylase catalyzes the carboxylation of biotin on its carrier protein (BCCP) and then the CO(2) group is transferred by the carboxyltransferase to acetyl-CoA to form malonyl-CoA. This chain is Acetyl-coenzyme A carboxylase carboxyl transferase subunit alpha, found in Burkholderia vietnamiensis (strain G4 / LMG 22486) (Burkholderia cepacia (strain R1808)).